Here is a 337-residue protein sequence, read N- to C-terminus: Holliday junction branch migration complex subunit RuvB (337 aa).

The large ATPase domain (RuvB-L) stretch occupies residues A4–Y186. Residues R26, G67, K70, T71, T72, E133 to Y135, R176, Y186, and R223 each bind ATP. T71 is a Mg(2+) binding site. Positions N187 to D257 are small ATPAse domain (RuvB-S). A head domain (RuvB-H) region spans residues A260–A337. 3 residues coordinate DNA: R296, R315, and R320.

It belongs to the RuvB family. In terms of assembly, homohexamer. Forms an RuvA(8)-RuvB(12)-Holliday junction (HJ) complex. HJ DNA is sandwiched between 2 RuvA tetramers; dsDNA enters through RuvA and exits via RuvB. An RuvB hexamer assembles on each DNA strand where it exits the tetramer. Each RuvB hexamer is contacted by two RuvA subunits (via domain III) on 2 adjacent RuvB subunits; this complex drives branch migration. In the full resolvosome a probable DNA-RuvA(4)-RuvB(12)-RuvC(2) complex forms which resolves the HJ.

It is found in the cytoplasm. The catalysed reaction is ATP + H2O = ADP + phosphate + H(+). In terms of biological role, the RuvA-RuvB-RuvC complex processes Holliday junction (HJ) DNA during genetic recombination and DNA repair, while the RuvA-RuvB complex plays an important role in the rescue of blocked DNA replication forks via replication fork reversal (RFR). RuvA specifically binds to HJ cruciform DNA, conferring on it an open structure. The RuvB hexamer acts as an ATP-dependent pump, pulling dsDNA into and through the RuvAB complex. RuvB forms 2 homohexamers on either side of HJ DNA bound by 1 or 2 RuvA tetramers; 4 subunits per hexamer contact DNA at a time. Coordinated motions by a converter formed by DNA-disengaged RuvB subunits stimulates ATP hydrolysis and nucleotide exchange. Immobilization of the converter enables RuvB to convert the ATP-contained energy into a lever motion, pulling 2 nucleotides of DNA out of the RuvA tetramer per ATP hydrolyzed, thus driving DNA branch migration. The RuvB motors rotate together with the DNA substrate, which together with the progressing nucleotide cycle form the mechanistic basis for DNA recombination by continuous HJ branch migration. Branch migration allows RuvC to scan DNA until it finds its consensus sequence, where it cleaves and resolves cruciform DNA. The sequence is that of Holliday junction branch migration complex subunit RuvB from Shewanella halifaxensis (strain HAW-EB4).